Reading from the N-terminus, the 911-residue chain is Bifunctional aspartokinase/homoserine dehydrogenase 1, chloroplastic (911 aa).

Residues 1 to 82 constitute a chloroplast transit peptide; the sequence is MPVVSLAKVV…VENGHLPKGD (82 aa). The segment at 83 to 331 is aspartokinase; sequence SWAVHKFGGT…VSEAVVLKTL (249 aa). The tract at residues 332 to 557 is interface; the sequence is SYQEAWEMSY…LSRTTLAVGI (226 aa). 2 consecutive ACT domains span residues 407-482 and 488-565; these read VEGT…IIPN and AVGQ…LIGG. A homoserine dehydrogenase region spans residues 558 to 911; it reads IGPGLIGGTL…RLAFYLGAPS (354 aa). NAD(+) is bound by residues isoleucine 563 and threonine 644. 3 residues coordinate NADP(+): isoleucine 563, threonine 644, and lysine 668. NADPH is bound by residues isoleucine 563, threonine 644, and lysine 668. Na(+) contacts are provided by glutamate 695, valine 698, alanine 700, and leucine 702. Positions 753 and 756 each coordinate NADP(+). Residues glutamate 756 and aspartate 767 each contribute to the L-homoserine site. Lysine 771 functions as the Proton donor in the catalytic mechanism. Glycine 888 provides a ligand contact to NAD(+). Position 888 (glycine 888) interacts with NADP(+). Glycine 888 serves as a coordination point for NADPH.

The protein in the N-terminal section; belongs to the aspartokinase family. It in the C-terminal section; belongs to the homoserine dehydrogenase family. In terms of assembly, homo- or heterodimer. The cofactor is a metal cation.

Its subcellular location is the plastid. The protein resides in the chloroplast. The enzyme catalyses L-homoserine + NADP(+) = L-aspartate 4-semialdehyde + NADPH + H(+). The catalysed reaction is L-homoserine + NAD(+) = L-aspartate 4-semialdehyde + NADH + H(+). It carries out the reaction L-aspartate + ATP = 4-phospho-L-aspartate + ADP. The protein operates within amino-acid biosynthesis; L-lysine biosynthesis via DAP pathway; (S)-tetrahydrodipicolinate from L-aspartate: step 1/4. It functions in the pathway amino-acid biosynthesis; L-methionine biosynthesis via de novo pathway; L-homoserine from L-aspartate: step 1/3. It participates in amino-acid biosynthesis; L-methionine biosynthesis via de novo pathway; L-homoserine from L-aspartate: step 3/3. Its pathway is amino-acid biosynthesis; L-threonine biosynthesis; L-threonine from L-aspartate: step 1/5. The protein operates within amino-acid biosynthesis; L-threonine biosynthesis; L-threonine from L-aspartate: step 3/5. With respect to regulation, inhibition of aspartate kinase activity by threonine and leucine and 3-fold activation by cysteine, isoleucine, valine, serine and alanine at 2.5 mM. Partial inhibition of homoserine dehydrogenase activity by threonine and cysteine (14% of activity remaining at saturation with either amino acid). No synergy between the effectors for both activation or inhibition. Its function is as follows. Bifunctional aspartate kinase and homoserine dehydrogenase that catalyzes the first and the third steps toward the synthesis of lysine, methionine and threonine from aspartate. The chain is Bifunctional aspartokinase/homoserine dehydrogenase 1, chloroplastic from Arabidopsis thaliana (Mouse-ear cress).